Reading from the N-terminus, the 457-residue chain is Phosphomethylpyrimidine synthase (457 aa).

Substrate contacts are provided by residues Asn-80, Met-109, Tyr-139, His-175, 195-197 (SRG), 236-239 (DSLR), and Glu-275. His-279 serves as a coordination point for Zn(2+). Residue Tyr-302 participates in substrate binding. Position 343 (His-343) interacts with Zn(2+). 3 residues coordinate [4Fe-4S] cluster: Cys-423, Cys-426, and Cys-431.

The protein belongs to the ThiC family. [4Fe-4S] cluster serves as cofactor.

It catalyses the reaction 5-amino-1-(5-phospho-beta-D-ribosyl)imidazole + S-adenosyl-L-methionine = 4-amino-2-methyl-5-(phosphooxymethyl)pyrimidine + CO + 5'-deoxyadenosine + formate + L-methionine + 3 H(+). Its pathway is cofactor biosynthesis; thiamine diphosphate biosynthesis. Catalyzes the synthesis of the hydroxymethylpyrimidine phosphate (HMP-P) moiety of thiamine from aminoimidazole ribotide (AIR) in a radical S-adenosyl-L-methionine (SAM)-dependent reaction. The polypeptide is Phosphomethylpyrimidine synthase (Nostoc punctiforme (strain ATCC 29133 / PCC 73102)).